A 552-amino-acid chain; its full sequence is MSAIALTVSMLALVAVLGLWIGNWKVYGVGLGIGGVLFGGIIVGHFAQTYELVLNGDMLHFIQEFGLILFVYTIGIQVGPGFFSSLRVSGLRLNCFAILMVIVGGLVTAIIHKLFAVPLPIILGVFSGAVTNTPALGAAQQILTDLGSPPQLVSQMGMGYAMAYPFGICGILLVMWLIRLFFKINVDREAKEFDSSHGQNRELLQTMNVAVRNPNLHGLSMQDVPLLNSDEVVCSRLKRGDLLMVPLSGTVIELGDYLHLVGQREALEKVRLVVGEEVDVTLSTASTVLQTARVVVTNEAVLGKKIRDLNLKQKYDVAITRLNRAGIELVASNNASLQFGDILNLVGRPESIEAVSAVVGNAQQKLQQVQMLPVFIGVGLGVLLGSIPLFIPGFPAALRLGLAGGPLVVALILGRIGSIGKLYWFMPPSANLALRELGIVLFLSVVGLKSGGDFINTLVNGDGLAWIGYGAMITGIPLLTVGILARMLAKMNYLTLCGMLAGSMTDPPALAFANGLHPTSGAAALSYATVYPLAMFLRIMSPQILAVLFWTL.

The next 6 helical transmembrane spans lie at 1-21 (MSAI…GLWI), 26-46 (VYGV…VGHF), 65-85 (FGLI…FFSS), 96-116 (FAIL…KLFA), 119-139 (LPII…LGAA), and 158-178 (MGYA…MWLI). RCK C-terminal domains follow at residues 192-276 (EFDS…VVGE) and 279-361 (DVTL…VVGN). 6 helical membrane passes run 371–391 (MLPV…PLFI), 393–413 (GFPA…ALIL), 439–459 (IVLF…NTLV), 464–484 (LAWI…VGIL), 493–513 (YLTL…LAFA), and 530–550 (VYPL…VLFW).

This sequence belongs to the AAE transporter (TC 2.A.81) family. YidE subfamily.

It is found in the cell membrane. This Yersinia enterocolitica serotype O:8 / biotype 1B (strain NCTC 13174 / 8081) protein is Putative transport protein YE4162.